Consider the following 554-residue polypeptide: Trichloroethene reductive dehalogenase (554 aa).

Residues 1–42 constitute a signal peptide (tat-type signal); the sequence is MSEKYHSTVTRRDFMKRLGLAGAGAGALGAAVLAENNLPHEF. 2 consecutive 4Fe-4S ferredoxin-type domains span residues 425–457 and 471–500; these read PTKP…HEGP and EGWH…NNSW. [4Fe-4S] cluster-binding residues include C437, C440, C443, C447, C480, C483, C486, and C490.

This sequence belongs to the PceA family. The cofactor is [4Fe-4S] cluster. Corrinoid serves as cofactor. In terms of processing, predicted to be exported by the Tat system. The position of the signal peptide cleavage has been experimentally proven.

It is found in the cell membrane. It catalyses the reaction trichloroethene + AH2 = (Z)-1,2-dichloroethene + chloride + A + H(+). The catalysed reaction is (Z)-1,2-dichloroethene + AH2 = chloroethene + chloride + A + H(+). It carries out the reaction 1,1-dichloroethene + AH2 = chloroethene + chloride + A + H(+). Loses 93% of its activity upon incubation with 1-iodopropane and titanium(III) citrate in the dark. Subsequent exposure to light restores 80% of the original activity. Completely inhibited by 2 mM sodium sulfite or sodium dithionite, and by 1 mM cuprous chloride. Functionally, catalyzes the reductive dechlorination of trichloroethene (TCE) to cis-1,2-dichloroethene (DCE) and of cis-1,2-dichloroethene to chloroethene. The substrate specificity is broad, and the enzyme can dehalogenate various substrates, including 1,1-dichloroethene (1,1-DCE), 1,2-dichloroethane and 1,2-dibromoethane. A variety of other haloalkanes and haloalkenes containing three to five carbon atoms are dehalogenated at lower rates. Trans-1,2-dichloroethene (trans-DCE) and chloroethene are degraded at rates which are approximately 2 orders of magnitude lower. Titanium(III) citrate and methyl viologen can be used as reductants. In Dehalococcoides mccartyi (strain ATCC BAA-2266 / KCTC 15142 / 195) (Dehalococcoides ethenogenes (strain 195)), this protein is Trichloroethene reductive dehalogenase.